A 247-amino-acid chain; its full sequence is UPF0280 protein MmarC7_0482 (247 aa).

The protein belongs to the UPF0280 family.

The protein is UPF0280 protein MmarC7_0482 of Methanococcus maripaludis (strain C7 / ATCC BAA-1331).